Reading from the N-terminus, the 393-residue chain is Probable acetyl-CoA acyltransferase (393 aa).

The active-site Acyl-thioester intermediate is cysteine 88. Active-site proton acceptor residues include histidine 349 and cysteine 378.

Belongs to the thiolase-like superfamily. Thiolase family.

It localises to the cytoplasm. The catalysed reaction is 2 acetyl-CoA = acetoacetyl-CoA + CoA. In Staphylococcus aureus (strain bovine RF122 / ET3-1), this protein is Probable acetyl-CoA acyltransferase.